Consider the following 29-residue polypeptide: Cyclotide mden-C (29 aa).

Positions 1–29 (GKPICGETCFKGKCYTPGCTCSYPVCKKN) form a cross-link, cyclopeptide (Gly-Asn). 3 cysteine pairs are disulfide-bonded: cysteine 5/cysteine 19, cysteine 9/cysteine 21, and cysteine 14/cysteine 26.

Belongs to the cyclotide family. This is a cyclic peptide.

In terms of biological role, probably participates in a plant defense mechanism. In Melicytus dentatus (Tree violet), this protein is Cyclotide mden-C.